A 450-amino-acid polypeptide reads, in one-letter code: MREVISIHIGQGGIQVGNACWDLFCLEHGIQPDGQMPSDKTIGGGDDAFNTFFSETGAGKHVPRAVFLDLEPTVCDEVRTGTYRQLFHPEQLISGKEDAANNFARGHYTIGKEIVDLCLDRIRKLADNCTGLQGFIGFHSVGGGTGSGLGSLLLERLSVDYGKKSKLTFTIYPSPQVSTAVVEPYNSVLSTHSLLEHTDVAVMLDNEAVYDICRRNLDIERPTYTNLNRLIAQVISSLTASLRFDGALNVDVTEFQTNLVPYPRIHFMLSSYAPVISAEKAYHEQLSVAEITNSSFEPASMMAKCDPRHGKYMACCMMYRGDVVPKDVNAAVATIKTKRTIQFVDWSPTGFKCGINYQPPTVVPGGDLAKVMRAVCMISNSTAIAEVFSRIDHKFDLMYAKRAFVHWYVGEGMEEGEFSEAREDLAALEKDYEEVGIETAEGEGEEEGME.

Glutamine 11 provides a ligand contact to GTP. An N6-acetyllysine modification is found at lysine 40. GTP is bound by residues glutamate 71, serine 140, glycine 144, threonine 145, threonine 179, asparagine 206, and asparagine 228. Glutamate 71 contributes to the Mg(2+) binding site. Glutamate 254 is a catalytic residue.

It belongs to the tubulin family. As to quaternary structure, dimer of alpha and beta chains. A typical microtubule is a hollow water-filled tube with an outer diameter of 25 nm and an inner diameter of 15 nM. Alpha-beta heterodimers associate head-to-tail to form protofilaments running lengthwise along the microtubule wall with the beta-tubulin subunit facing the microtubule plus end conferring a structural polarity. Microtubules usually have 13 protofilaments but different protofilament numbers can be found in some organisms and specialized cells. Mg(2+) is required as a cofactor. Acetylation of alpha chains at Lys-40 stabilizes microtubules and affects affinity and processivity of microtubule motors. This modification has a role in multiple cellular functions, ranging from cell motility, cell cycle progression or cell differentiation to intracellular trafficking and signaling.

It localises to the cytoplasm. Its subcellular location is the cytoskeleton. It carries out the reaction GTP + H2O = GDP + phosphate + H(+). Functionally, tubulin is the major constituent of microtubules, a cylinder consisting of laterally associated linear protofilaments composed of alpha- and beta-tubulin heterodimers. Microtubules grow by the addition of GTP-tubulin dimers to the microtubule end, where a stabilizing cap forms. Below the cap, tubulin dimers are in GDP-bound state, owing to GTPase activity of alpha-tubulin. In Euplotoides octocarinatus (Freshwater ciliate), this protein is Tubulin alpha chain.